The sequence spans 87 residues: Protein anon-73B1 (87 aa).

A helical transmembrane segment spans residues 25-47 (LLIRYGLYVGALFQFVCISAAVL). The interval 52 to 87 (PDVNSNPETGEVTEREGEPVRTRLHKIRKLEKKKRR) is disordered. The span at 63–72 (VTEREGEPVR) shows a compositional bias: basic and acidic residues. Over residues 73-87 (TRLHKIRKLEKKKRR) the composition is skewed to basic residues.

Belongs to the UPF0239 family.

It localises to the membrane. This is Protein anon-73B1 from Drosophila erecta (Fruit fly).